Reading from the N-terminus, the 569-residue chain is Cryptochrome DASH, chloroplastic/mitochondrial (569 aa).

One can recognise a Photolyase/cryptochrome alpha/beta domain in the interval 84 to 221 (GVTILWFRND…KLELIWGSTM (138 aa)). FAD contacts are provided by residues Tyr-316 and 329 to 333 (STKFS). Residue Arg-436 coordinates ATP. The FAD site is built by Asp-466 and Asp-468. An ATP-binding site is contributed by Asp-485. The tract at residues 541-569 (GNGPMAGGSKSGGGFRGSHSGRRSRHNGP) is disordered. The segment covering 544-556 (PMAGGSKSGGGFR) has biased composition (gly residues). A compositionally biased stretch (basic residues) spans 559–569 (HSGRRSRHNGP).

The protein belongs to the DNA photolyase class-1 family. As to quaternary structure, homodimer. FAD serves as cofactor. (6R)-5,10-methylene-5,6,7,8-tetrahydrofolate is required as a cofactor.

The protein localises to the plastid. It localises to the chloroplast. The protein resides in the mitochondrion. Its function is as follows. May have a photoreceptor function. Binds ss- and ds-DNA in a sequence non-specific manner. Has a photolyase activity specific for cyclobutane pyrimidine dimers in ssDNA. This is Cryptochrome DASH, chloroplastic/mitochondrial (CRYD) from Arabidopsis thaliana (Mouse-ear cress).